Here is a 592-residue protein sequence, read N- to C-terminus: Ichor (592 aa).

The segment covering Asn-114–His-123 has biased composition (polar residues). Disordered stretches follow at residues Asn-114–Ser-156, Leu-343–Thr-377, Leu-416–Ser-439, and His-459–Gly-527. Over residues Pro-124 to Asn-148 the composition is skewed to low complexity. The segment covering Ser-356 to Ile-369 has biased composition (gly residues). A compositionally biased stretch (polar residues) spans His-459 to Glu-469. Residues Gln-488–Gln-500 show a composition bias toward low complexity. Residues Pro-507–Asp-524 show a composition bias toward polar residues. 2 C2H2-type zinc fingers span residues His-536–His-558 and Phe-564–His-586.

The protein localises to the nucleus. Its function is as follows. Transcriptional activator. In tracheal terminal cells, regulates the transcription of factors involved in the formation of a mature apical extracellular matrix (aECM) which is essential for the integrity and shape of seamless tubes. The protein is Ichor of Drosophila melanogaster (Fruit fly).